We begin with the raw amino-acid sequence, 268 residues long: Tryptophan synthase alpha chain (268 aa).

Catalysis depends on proton acceptor residues E47 and D58.

This sequence belongs to the TrpA family. In terms of assembly, tetramer of two alpha and two beta chains.

The enzyme catalyses (1S,2R)-1-C-(indol-3-yl)glycerol 3-phosphate + L-serine = D-glyceraldehyde 3-phosphate + L-tryptophan + H2O. Its pathway is amino-acid biosynthesis; L-tryptophan biosynthesis; L-tryptophan from chorismate: step 5/5. Its function is as follows. The alpha subunit is responsible for the aldol cleavage of indoleglycerol phosphate to indole and glyceraldehyde 3-phosphate. This chain is Tryptophan synthase alpha chain, found in Chlorobium phaeobacteroides (strain BS1).